Reading from the N-terminus, the 720-residue chain is Ciliated left-right organizer metallopeptidase (720 aa).

An N-terminal signal peptide occupies residues methionine 1–serine 25. At alanine 26 to serine 668 the chain is on the extracellular side. Position 243 (histidine 243) interacts with Zn(2+). Glutamate 244 is an active-site residue. The Zn(2+) site is built by histidine 247 and histidine 322. Residues tyrosine 669–tryptophan 689 traverse the membrane as a helical segment. Over tyrosine 690–valine 720 the chain is Cytoplasmic.

Belongs to the peptidase M8 family. The cofactor is Zn(2+).

The protein localises to the membrane. Functionally, putative metalloprotease playing a role in the process of LR patterning. The chain is Ciliated left-right organizer metallopeptidase (cirop) from Xenopus laevis (African clawed frog).